Here is a 364-residue protein sequence, read N- to C-terminus: Doublecortin domain-containing protein 2C (364 aa).

Doublecortin domains follow at residues 16–98 (KTIV…LDYI) and 136–217 (RHIN…FPYW). Residues 233 to 255 (VEKNSQRKKKVDSKGKEPCKYDG) form a disordered region.

Expressed in testis and spermatozoa (at protein level).

It localises to the cell projection. It is found in the cilium. The protein localises to the flagellum. The protein resides in the cytoplasm. In Homo sapiens (Human), this protein is Doublecortin domain-containing protein 2C.